The chain runs to 161 residues: 6,7-dimethyl-8-ribityllumazine synthase (161 aa).

Residues tryptophan 31, 63–65, and 85–87 contribute to the 5-amino-6-(D-ribitylamino)uracil site; these read SFE and VVI. 90–91 is a binding site for (2S)-2-hydroxy-3-oxobutyl phosphate; it reads GT. Histidine 93 acts as the Proton donor in catalysis. Phenylalanine 118 lines the 5-amino-6-(D-ribitylamino)uracil pocket. Arginine 132 provides a ligand contact to (2S)-2-hydroxy-3-oxobutyl phosphate.

This sequence belongs to the DMRL synthase family.

The enzyme catalyses (2S)-2-hydroxy-3-oxobutyl phosphate + 5-amino-6-(D-ribitylamino)uracil = 6,7-dimethyl-8-(1-D-ribityl)lumazine + phosphate + 2 H2O + H(+). It participates in cofactor biosynthesis; riboflavin biosynthesis; riboflavin from 2-hydroxy-3-oxobutyl phosphate and 5-amino-6-(D-ribitylamino)uracil: step 1/2. Catalyzes the formation of 6,7-dimethyl-8-ribityllumazine by condensation of 5-amino-6-(D-ribitylamino)uracil with 3,4-dihydroxy-2-butanone 4-phosphate. This is the penultimate step in the biosynthesis of riboflavin. This chain is 6,7-dimethyl-8-ribityllumazine synthase, found in Pseudarthrobacter chlorophenolicus (strain ATCC 700700 / DSM 12829 / CIP 107037 / JCM 12360 / KCTC 9906 / NCIMB 13794 / A6) (Arthrobacter chlorophenolicus).